The sequence spans 236 residues: Envelope glycoprotein (236 aa).

Residues 1–202 (CQFDGNTISG…EWILGVLNGN (202 aa)) lie on the Lumenal side of the membrane. N-linked (GlcNAc...) asparagine; by host glycosylation occurs at N25. Intrachain disulfides connect C67-C97, C90-C142, C107-C112, C143-C148, and C182-C186. The helical transmembrane segment at 203–223 (WMVVAVLIALLILSILLFTLC) threads the bilayer. Binding to the ribonucleoprotein stretches follow at residues 219-231 (LFTLCCPRRPSYR) and 219-236 (LFTLCCPRRPSYRKEHKP). Residues 224–236 (CPRRPSYRKEHKP) lie on the Cytoplasmic side of the membrane.

It belongs to the hantavirus envelope glycoprotein family. As to quaternary structure, homodimer. Homotetramer; forms heterotetrameric Gn-Gc spikes in the pre-fusion conformation. Homotrimer; forms homotrimer in the post-fusion conformation at acidic pH. Interacts (via C-terminus) with the nucleoprotein. In terms of processing, envelope polyprotein precursor is quickly cleaved in vivo just after synthesis, presumably by host signal peptidase.

Its subcellular location is the virion membrane. The protein localises to the host cell surface. It is found in the host Golgi apparatus membrane. It localises to the host endoplasmic reticulum membrane. Functionally, forms homotetramers with glycoprotein N at the surface of the virion. Attaches the virion to host cell receptors including integrin ITGAV/ITGB3. This attachment induces virion internalization predominantly through clathrin-dependent endocytosis. Class II fusion protein that promotes fusion of viral membrane with host endosomal membrane after endocytosis of the virion. This Homo sapiens (Human) protein is Envelope glycoprotein (GP).